The following is a 143-amino-acid chain: MTTMATQGAWLRMTSSAKSMTKSTVTSKELGFLTSQLSGLRISYTPSDVINRISLPSFPGIQPIVARRICPFTGKKANRANKVSFSNHKTKKLQFVNLQYKRVWWEAGKRFVKLRLSTKALKTIEKNGLDAVAKKAGIDLRKK.

A chloroplast-targeting transit peptide spans 1 to 66; that stretch reads MTTMATQGAW…SFPGIQPIVA (66 aa).

The protein belongs to the bacterial ribosomal protein bL28 family. As to quaternary structure, part of the 50S ribosomal subunit.

Its subcellular location is the plastid. The protein resides in the chloroplast. This chain is Large ribosomal subunit protein bL28c (RPL28), found in Arabidopsis thaliana (Mouse-ear cress).